The sequence spans 132 residues: Large ribosomal subunit protein bL17 (132 aa).

This sequence belongs to the bacterial ribosomal protein bL17 family. As to quaternary structure, part of the 50S ribosomal subunit. Contacts protein L32.

This is Large ribosomal subunit protein bL17 from Cellvibrio japonicus (strain Ueda107) (Pseudomonas fluorescens subsp. cellulosa).